The following is a 104-amino-acid chain: L-rhamnose mutarotase (104 aa).

Residue Y18 coordinates substrate. The Proton donor role is filled by H22. Substrate contacts are provided by residues Y41 and 76-77; that span reads WW.

This sequence belongs to the rhamnose mutarotase family. In terms of assembly, homodimer.

The protein localises to the cytoplasm. The enzyme catalyses alpha-L-rhamnose = beta-L-rhamnose. Its pathway is carbohydrate metabolism; L-rhamnose metabolism. Its function is as follows. Involved in the anomeric conversion of L-rhamnose. In Shigella sonnei (strain Ss046), this protein is L-rhamnose mutarotase.